Here is a 415-residue protein sequence, read N- to C-terminus: Very late expression factor 1 (415 aa).

The region spanning 171–357 (REIINTILDC…DESDDNDEDD (187 aa)) is the Tyr recombinase domain. Residues Arg214, Lys242, Arg307, and His330 contribute to the active site. The tract at residues 339-415 (YLNKYDVGVD…GDDADLLSFN (77 aa)) is disordered. Tyr343 acts as the O-(3'-phospho-DNA)-tyrosine intermediate in catalysis. Residues 346-363 (GVDESDDNDEDDDDDEND) are compositionally biased toward acidic residues. Residues 375–404 (NISNYDINNSSSGNSSSNNTSGNDFNNNIS) show a composition bias toward low complexity.

It belongs to the 'phage' integrase family.

Functionally, involved in very late gene activation. In Heliothis zea nuclear polyhedrosis virus (HzSNPV), this protein is Very late expression factor 1 (VLF-1).